Reading from the N-terminus, the 91-residue chain is Small ribosomal subunit protein uS19 (91 aa).

Belongs to the universal ribosomal protein uS19 family.

Functionally, protein S19 forms a complex with S13 that binds strongly to the 16S ribosomal RNA. The sequence is that of Small ribosomal subunit protein uS19 from Opitutus terrae (strain DSM 11246 / JCM 15787 / PB90-1).